Reading from the N-terminus, the 96-residue chain is Protein Vpr (96 aa).

The interval 1-42 (MEQAPADQGPQREPHNEWTLELLEELKQEAVRHFPRIWLHSL) is homooligomerization. 3 positions are modified to phosphoserine; by host: Ser-79, Ser-94, and Ser-96.

This sequence belongs to the HIV-1 VPR protein family. In terms of assembly, homooligomer, may form homodimer. Interacts with p6-gag region of the Pr55 Gag precursor protein through a (Leu-X-X)4 motif near the C-terminus of the P6gag protein. Interacts with host UNG. May interact with host RAD23A/HHR23A. Interacts with host VPRBP/DCAF1, leading to hijack the CUL4A-RBX1-DDB1-DCAF1/VPRBP complex, mediating ubiquitination of host proteins such as TERT and ZGPAT and arrest of the cell cycle in G2 phase. In terms of processing, phosphorylated on several residues by host. These phosphorylations regulate VPR activity for the nuclear import of the HIV-1 pre-integration complex.

Its subcellular location is the virion. The protein localises to the host nucleus. It localises to the host extracellular space. Functionally, during virus replication, may deplete host UNG protein, and incude G2-M cell cycle arrest. Acts by targeting specific host proteins for degradation by the 26S proteasome, through association with the cellular CUL4A-DDB1 E3 ligase complex by direct interaction with host VPRPB/DCAF-1. Cell cycle arrest reportedly occurs within hours of infection and is not blocked by antiviral agents, suggesting that it is initiated by the VPR carried into the virion. Additionally, VPR induces apoptosis in a cell cycle dependent manner suggesting that these two effects are mechanistically linked. Detected in the serum and cerebrospinal fluid of AIDS patient, VPR may also induce cell death to bystander cells. In terms of biological role, during virus entry, plays a role in the transport of the viral pre-integration (PIC) complex to the host nucleus. This function is crucial for viral infection of non-dividing macrophages. May act directly at the nuclear pore complex, by binding nucleoporins phenylalanine-glycine (FG)-repeat regions. This Homo sapiens (Human) protein is Protein Vpr.